We begin with the raw amino-acid sequence, 501 residues long: Pre-mRNA-splicing factor 38B (501 aa).

Residues 1 to 11 (MAGSQQQQQQQ) are compositionally biased toward low complexity. Disordered regions lie at residues 1–28 (MAGS…LPLW) and 208–501 (DQHM…ADSP). The segment covering 243 to 273 (GDKRRSRTPRRSPSPRKSQNRSRSRSHHRER) has biased composition (basic residues). Residues 281-302 (ELERERDRQRKEREGKDRDRDR) adopt a coiled-coil conformation. Residues 281 to 328 (ELERERDRQRKEREGKDRDRDRDRDRERDRERDRDRRRSRTPDRNAER) are compositionally biased toward basic and acidic residues. A compositionally biased stretch (basic residues) spans 329–341 (RRSRSRERRRSRS). Positions 342–408 (TSRDKRTERK…EEKKHREEKR (67 aa)) are enriched in basic and acidic residues. Basic residues predominate over residues 409–435 (SKRSRSRSRDRKHKAERSSKKRSRSGS). Residues 437 to 447 (SRQEAGEEKNR) are compositionally biased toward basic and acidic residues. The span at 448-468 (KRERSHSKDRQHKRSRSKERS) shows a compositional bias: basic residues. Over residues 469-491 (HRRESSNERIHARQERPSSESGE) the composition is skewed to basic and acidic residues. Polar residues predominate over residues 492–501 (RTNSVRADSP).

It belongs to the PRP38 family.

Its subcellular location is the nucleus. Functionally, may be required for pre-mRNA splicing. This is Pre-mRNA-splicing factor 38B (prpf38b) from Danio rerio (Zebrafish).